Here is a 1024-residue protein sequence, read N- to C-terminus: Error-prone DNA polymerase (1024 aa).

Belongs to the DNA polymerase type-C family. DnaE2 subfamily.

It is found in the cytoplasm. The catalysed reaction is DNA(n) + a 2'-deoxyribonucleoside 5'-triphosphate = DNA(n+1) + diphosphate. Functionally, DNA polymerase involved in damage-induced mutagenesis and translesion synthesis (TLS). It is not the major replicative DNA polymerase. This chain is Error-prone DNA polymerase, found in Vibrio vulnificus (strain YJ016).